A 292-amino-acid polypeptide reads, in one-letter code: Histamine N-methyltransferase (292 aa).

Glu28 contributes to the substrate binding site. S-adenosyl-L-methionine contacts are provided by Gly60, Glu89, Gln94, Ser120, and Ile142. Asn283 provides a ligand contact to substrate.

This sequence belongs to the class I-like SAM-binding methyltransferase superfamily. HNMT family. Monomer.

The protein localises to the cytoplasm. The catalysed reaction is histamine + S-adenosyl-L-methionine = N(tau)-methylhistamine + S-adenosyl-L-homocysteine + H(+). Functionally, inactivates histamine by N-methylation. Plays an important role in degrading histamine and in regulating the airway response to histamine. This Homo sapiens (Human) protein is Histamine N-methyltransferase (HNMT).